The sequence spans 382 residues: Galactokinase (382 aa).

34-37 (EHTD) contributes to the substrate binding site. 124 to 130 (GAGLSSS) contacts ATP. Residues S130 and E162 each contribute to the Mg(2+) site. The Proton acceptor role is filled by D174. Substrate is bound at residue Y223.

The protein belongs to the GHMP kinase family. GalK subfamily.

The protein localises to the cytoplasm. The enzyme catalyses alpha-D-galactose + ATP = alpha-D-galactose 1-phosphate + ADP + H(+). It participates in carbohydrate metabolism; galactose metabolism. Functionally, catalyzes the transfer of the gamma-phosphate of ATP to D-galactose to form alpha-D-galactose-1-phosphate (Gal-1-P). The chain is Galactokinase from Escherichia coli O157:H7 (strain EC4115 / EHEC).